A 260-amino-acid chain; its full sequence is Small ribosomal subunit protein uS3 (260 aa).

Positions 39 to 114 constitute a KH type-2 domain; it reads LRQYIEQKLG…QIRINVVEVQ (76 aa). The tract at residues 219-260 is disordered; that stretch reads EVAAPPPSTRDRDRDRGDRDREPRRRQQQRRRQQFEDRSNEG. 2 stretches are compositionally biased toward basic and acidic residues: residues 227–243 and 251–260; these read TRDRDRDRGDRDREPRR and QQFEDRSNEG.

It belongs to the universal ribosomal protein uS3 family. As to quaternary structure, part of the 30S ribosomal subunit. Forms a tight complex with proteins S10 and S14.

In terms of biological role, binds the lower part of the 30S subunit head. Binds mRNA in the 70S ribosome, positioning it for translation. This chain is Small ribosomal subunit protein uS3, found in Trichormus variabilis (strain ATCC 29413 / PCC 7937) (Anabaena variabilis).